The chain runs to 65 residues: Small ribosomal subunit protein bS21A (65 aa).

The protein belongs to the bacterial ribosomal protein bS21 family.

The protein is Small ribosomal subunit protein bS21A of Francisella tularensis subsp. holarctica (strain LVS).